A 267-amino-acid polypeptide reads, in one-letter code: Hydroxyethylthiazole kinase 2 (267 aa).

Met-41 provides a ligand contact to substrate. ATP is bound by residues Lys-116 and Thr-166. Gly-193 is a binding site for substrate.

The protein belongs to the Thz kinase family. It depends on Mg(2+) as a cofactor.

The enzyme catalyses 5-(2-hydroxyethyl)-4-methylthiazole + ATP = 4-methyl-5-(2-phosphooxyethyl)-thiazole + ADP + H(+). It participates in cofactor biosynthesis; thiamine diphosphate biosynthesis; 4-methyl-5-(2-phosphoethyl)-thiazole from 5-(2-hydroxyethyl)-4-methylthiazole: step 1/1. Catalyzes the phosphorylation of the hydroxyl group of 4-methyl-5-beta-hydroxyethylthiazole (THZ). The sequence is that of Hydroxyethylthiazole kinase 2 from Streptococcus pneumoniae (strain JJA).